A 542-amino-acid chain; its full sequence is Protein lin-9 homolog (542 aa).

A2 is modified (N-acetylalanine). K21 is covalently cross-linked (Glycyl lysine isopeptide (Lys-Gly) (interchain with G-Cter in SUMO2)). Phosphoserine is present on residues S65 and S95. T96 and T304 each carry phosphothreonine. S309 and S321 each carry phosphoserine.

This sequence belongs to the lin-9 family. As to quaternary structure, component of the DREAM complex (also named LINC complex) at least composed of E2F4, E2F5, LIN9, LIN37, LIN52, LIN54, MYBL1, MYBL2, RBL1, RBL2, RBBP4, TFDP1 and TFDP2. The complex exists in quiescent cells where it represses cell cycle-dependent genes. It dissociates in S phase when LIN9, LIN37, LIN52 and LIN54 form a subcomplex that binds to MYBL2. Interacts with RB1.

The protein localises to the nucleus. The protein resides in the nucleoplasm. In terms of biological role, acts as a tumor suppressor. Inhibits DNA synthesis. Its ability to inhibit oncogenic transformation is mediated through its association with RB1. Plays a role in the expression of genes required for the G1/S transition. This Mus musculus (Mouse) protein is Protein lin-9 homolog (Lin9).